The chain runs to 347 residues: Protein RecA (347 aa).

64–71 (GPESSGKT) is a binding site for ATP.

Belongs to the RecA family.

Its subcellular location is the cytoplasm. Its function is as follows. Can catalyze the hydrolysis of ATP in the presence of single-stranded DNA, the ATP-dependent uptake of single-stranded DNA by duplex DNA, and the ATP-dependent hybridization of homologous single-stranded DNAs. It interacts with LexA causing its activation and leading to its autocatalytic cleavage. This chain is Protein RecA, found in Bacillus velezensis (strain DSM 23117 / BGSC 10A6 / LMG 26770 / FZB42) (Bacillus amyloliquefaciens subsp. plantarum).